The primary structure comprises 60 residues: MKGEKYTRFERARIVGARALQIFMGAPVLIRTDSIDPLEIALEEMRLGVIPITVKRDRKR.

The protein belongs to the archaeal Rpo6/eukaryotic RPB6 RNA polymerase subunit family. Part of the RNA polymerase complex.

The protein resides in the cytoplasm. The enzyme catalyses RNA(n) + a ribonucleoside 5'-triphosphate = RNA(n+1) + diphosphate. In terms of biological role, DNA-dependent RNA polymerase (RNAP) catalyzes the transcription of DNA into RNA using the four ribonucleoside triphosphates as substrates. The polypeptide is DNA-directed RNA polymerase subunit Rpo6 (Methanothrix thermoacetophila (strain DSM 6194 / JCM 14653 / NBRC 101360 / PT) (Methanosaeta thermophila)).